Reading from the N-terminus, the 469-residue chain is 3-isopropylmalate dehydratase large subunit (469 aa).

[4Fe-4S] cluster-binding residues include Cys-350, Cys-410, and Cys-413.

Belongs to the aconitase/IPM isomerase family. LeuC type 1 subfamily. In terms of assembly, heterodimer of LeuC and LeuD. Requires [4Fe-4S] cluster as cofactor.

It carries out the reaction (2R,3S)-3-isopropylmalate = (2S)-2-isopropylmalate. The protein operates within amino-acid biosynthesis; L-leucine biosynthesis; L-leucine from 3-methyl-2-oxobutanoate: step 2/4. Catalyzes the isomerization between 2-isopropylmalate and 3-isopropylmalate, via the formation of 2-isopropylmaleate. The protein is 3-isopropylmalate dehydratase large subunit of Sinorhizobium medicae (strain WSM419) (Ensifer medicae).